We begin with the raw amino-acid sequence, 130 residues long: T-cell receptor alpha chain V region PHDS58 (130 aa).

A signal peptide spans 1-20 (MLLALLPVLGIHFVLRDAQA). A v segment region spans residues 21 to 114 (QSVTQPDARV…SAVYFCAVSG (94 aa)). The N-linked (GlcNAc...) asparagine glycan is linked to Asn-90. Residues 115–130 (FASALTFGSGTKVIVL) are j segment.

The polypeptide is T-cell receptor alpha chain V region PHDS58 (Mus musculus (Mouse)).